Consider the following 155-residue polypeptide: Transcriptional regulator MraZ (155 aa).

SpoVT-AbrB domains follow at residues 7-54 (TYEC…PMEE) and 83-126 (VKTV…DKDK).

This sequence belongs to the MraZ family. As to quaternary structure, forms oligomers.

It localises to the cytoplasm. The protein localises to the nucleoid. The chain is Transcriptional regulator MraZ from Christiangramia forsetii (strain DSM 17595 / CGMCC 1.15422 / KT0803) (Gramella forsetii).